The following is a 248-amino-acid chain: Triosephosphate isomerase (248 aa).

A substrate-binding site is contributed by 9-11 (NWK). Catalysis depends on histidine 94, which acts as the Electrophile. The active-site Proton acceptor is the glutamate 166. Substrate-binding positions include glycine 172, serine 212, and 233 to 234 (GG).

The protein belongs to the triosephosphate isomerase family. In terms of assembly, homodimer.

It localises to the cytoplasm. The enzyme catalyses D-glyceraldehyde 3-phosphate = dihydroxyacetone phosphate. The protein operates within carbohydrate biosynthesis; gluconeogenesis. It functions in the pathway carbohydrate degradation; glycolysis; D-glyceraldehyde 3-phosphate from glycerone phosphate: step 1/1. Involved in the gluconeogenesis. Catalyzes stereospecifically the conversion of dihydroxyacetone phosphate (DHAP) to D-glyceraldehyde-3-phosphate (G3P). This chain is Triosephosphate isomerase, found in Clostridium botulinum (strain Loch Maree / Type A3).